The sequence spans 604 residues: Vacuolar protein sorting-associated protein 64 (604 aa).

Positions 1–89 (MVELEKRRRP…SVHQVSQQQQ (89 aa)) are disordered. Topologically, residues 1–578 (MVELEKRRRP…LGVVEGKRTR (578 aa)) are cytoplasmic. Positions 22–34 (DQSNSQGMTKTPE) are enriched in polar residues. 2 stretches are compositionally biased toward low complexity: residues 44 to 57 (RARS…SRSN) and 77 to 89 (SPPS…QQQQ). Residues 185–257 (LKLGRPVTNS…NGTFVNGVKI (73 aa)) enclose the FHA domain. Residues 404–563 (NLINMIKTLT…EEKKDTEDTL (160 aa)) are a coiled coil. The tract at residues 539–561 (INNDNNAKVKQNDSREEKKDTED) is disordered. Over residues 548 to 560 (KQNDSREEKKDTE) the composition is skewed to basic and acidic residues. A helical; Anchor for type IV membrane protein transmembrane segment spans residues 579 to 598 (VSKGMLFGVVAISFGLVATA). The Lumenal portion of the chain corresponds to 599 to 604 (VKQLPQ).

Component of a complex at least composed of FAR3, FAR7, FAR8, FAR10, FAR11 and VPS64.

It is found in the endoplasmic reticulum membrane. Functionally, participates in the control of the reentry into the cell cycle following pheromone treatment. Involved in vacuolar protein sorting. The polypeptide is Vacuolar protein sorting-associated protein 64 (VPS64) (Saccharomyces cerevisiae (strain ATCC 204508 / S288c) (Baker's yeast)).